A 129-amino-acid chain; its full sequence is Small ribosomal subunit protein uS11 (129 aa).

It belongs to the universal ribosomal protein uS11 family. In terms of assembly, part of the 30S ribosomal subunit. Interacts with proteins S7 and S18. Binds to IF-3.

Its function is as follows. Located on the platform of the 30S subunit, it bridges several disparate RNA helices of the 16S rRNA. Forms part of the Shine-Dalgarno cleft in the 70S ribosome. This chain is Small ribosomal subunit protein uS11, found in Haemophilus ducreyi (strain 35000HP / ATCC 700724).